We begin with the raw amino-acid sequence, 319 residues long: Fructokinase (319 aa).

Belongs to the carbohydrate kinase PfkB family. In terms of tissue distribution, expressed in swelling stolons and, at higher levels, in developing tubers. Low levels found in leaves and stems from tuberizing plants.

It catalyses the reaction D-fructose + ATP = D-fructose 6-phosphate + ADP + H(+). It participates in glycan biosynthesis; starch biosynthesis. In terms of biological role, may play an important role in maintaining the flux of carbon towards starch formation. This chain is Fructokinase, found in Solanum tuberosum (Potato).